The chain runs to 253 residues: 3-deoxy-manno-octulosonate cytidylyltransferase (253 aa).

This sequence belongs to the KdsB family.

The protein localises to the cytoplasm. It catalyses the reaction 3-deoxy-alpha-D-manno-oct-2-ulosonate + CTP = CMP-3-deoxy-beta-D-manno-octulosonate + diphosphate. Its pathway is nucleotide-sugar biosynthesis; CMP-3-deoxy-D-manno-octulosonate biosynthesis; CMP-3-deoxy-D-manno-octulosonate from 3-deoxy-D-manno-octulosonate and CTP: step 1/1. It participates in bacterial outer membrane biogenesis; lipopolysaccharide biosynthesis. In terms of biological role, activates KDO (a required 8-carbon sugar) for incorporation into bacterial lipopolysaccharide in Gram-negative bacteria. The protein is 3-deoxy-manno-octulosonate cytidylyltransferase of Idiomarina loihiensis (strain ATCC BAA-735 / DSM 15497 / L2-TR).